The sequence spans 338 residues: 4-hydroxy-3-methylbut-2-enyl diphosphate reductase (338 aa).

Residue cysteine 21 coordinates [4Fe-4S] cluster. Positions 50 and 83 each coordinate (2E)-4-hydroxy-3-methylbut-2-enyl diphosphate. Residues histidine 50 and histidine 83 each coordinate dimethylallyl diphosphate. Positions 50 and 83 each coordinate isopentenyl diphosphate. Residue cysteine 105 participates in [4Fe-4S] cluster binding. Histidine 133 contacts (2E)-4-hydroxy-3-methylbut-2-enyl diphosphate. Histidine 133 provides a ligand contact to dimethylallyl diphosphate. Residue histidine 133 coordinates isopentenyl diphosphate. The active-site Proton donor is glutamate 135. Threonine 173 lines the (2E)-4-hydroxy-3-methylbut-2-enyl diphosphate pocket. Cysteine 203 contacts [4Fe-4S] cluster. Residues serine 231, serine 232, asparagine 233, and serine 276 each coordinate (2E)-4-hydroxy-3-methylbut-2-enyl diphosphate. Residues serine 231, serine 232, asparagine 233, and serine 276 each coordinate dimethylallyl diphosphate. 4 residues coordinate isopentenyl diphosphate: serine 231, serine 232, asparagine 233, and serine 276.

Belongs to the IspH family. It depends on [4Fe-4S] cluster as a cofactor.

It carries out the reaction isopentenyl diphosphate + 2 oxidized [2Fe-2S]-[ferredoxin] + H2O = (2E)-4-hydroxy-3-methylbut-2-enyl diphosphate + 2 reduced [2Fe-2S]-[ferredoxin] + 2 H(+). It catalyses the reaction dimethylallyl diphosphate + 2 oxidized [2Fe-2S]-[ferredoxin] + H2O = (2E)-4-hydroxy-3-methylbut-2-enyl diphosphate + 2 reduced [2Fe-2S]-[ferredoxin] + 2 H(+). It functions in the pathway isoprenoid biosynthesis; dimethylallyl diphosphate biosynthesis; dimethylallyl diphosphate from (2E)-4-hydroxy-3-methylbutenyl diphosphate: step 1/1. The protein operates within isoprenoid biosynthesis; isopentenyl diphosphate biosynthesis via DXP pathway; isopentenyl diphosphate from 1-deoxy-D-xylulose 5-phosphate: step 6/6. Catalyzes the conversion of 1-hydroxy-2-methyl-2-(E)-butenyl 4-diphosphate (HMBPP) into a mixture of isopentenyl diphosphate (IPP) and dimethylallyl diphosphate (DMAPP). Acts in the terminal step of the DOXP/MEP pathway for isoprenoid precursor biosynthesis. This Streptomyces coelicolor (strain ATCC BAA-471 / A3(2) / M145) protein is 4-hydroxy-3-methylbut-2-enyl diphosphate reductase.